We begin with the raw amino-acid sequence, 429 residues long: Argininosuccinate lyase (429 aa).

It belongs to the lyase 1 family. Argininosuccinate lyase subfamily.

It localises to the cytoplasm. It carries out the reaction 2-(N(omega)-L-arginino)succinate = fumarate + L-arginine. It functions in the pathway amino-acid biosynthesis; L-arginine biosynthesis; L-arginine from L-ornithine and carbamoyl phosphate: step 3/3. The chain is Argininosuccinate lyase from Pyrobaculum arsenaticum (strain DSM 13514 / JCM 11321 / PZ6).